Here is an 82-residue protein sequence, read N- to C-terminus: Translational regulator CsrA (82 aa).

Belongs to the CsrA/RsmA family. As to quaternary structure, homodimer; the beta-strands of each monomer intercalate to form a hydrophobic core, while the alpha-helices form wings that extend away from the core.

It localises to the cytoplasm. In terms of biological role, a translational regulator that binds mRNA to regulate translation initiation and/or mRNA stability. Usually binds in the 5'-UTR at or near the Shine-Dalgarno sequence preventing ribosome-binding, thus repressing translation. Its main target seems to be the major flagellin gene, while its function is anatagonized by FliW. The sequence is that of Translational regulator CsrA from Brachyspira hyodysenteriae (strain ATCC 49526 / WA1).